A 367-amino-acid polypeptide reads, in one-letter code: Phosphoribosylaminoimidazole-succinocarboxamide synthase (367 aa).

This sequence belongs to the SAICAR synthetase family.

It carries out the reaction 5-amino-1-(5-phospho-D-ribosyl)imidazole-4-carboxylate + L-aspartate + ATP = (2S)-2-[5-amino-1-(5-phospho-beta-D-ribosyl)imidazole-4-carboxamido]succinate + ADP + phosphate + 2 H(+). It participates in purine metabolism; IMP biosynthesis via de novo pathway; 5-amino-1-(5-phospho-D-ribosyl)imidazole-4-carboxamide from 5-amino-1-(5-phospho-D-ribosyl)imidazole-4-carboxylate: step 1/2. The sequence is that of Phosphoribosylaminoimidazole-succinocarboxamide synthase from Shewanella oneidensis (strain ATCC 700550 / JCM 31522 / CIP 106686 / LMG 19005 / NCIMB 14063 / MR-1).